The following is a 346-amino-acid chain: Leucine zipper protein 2 (346 aa).

The signal sequence occupies residues 1 to 19; it reads MKFSPAHYLLPLLPALVLS. A coiled-coil region spans residues 16-211; the sequence is LVLSTRQDYE…QMKAMKETVQ (196 aa). Residue asparagine 133 is glycosylated (N-linked (GlcNAc...) asparagine). The interval 164 to 192 is leucine-zipper; it reads LRYGKKDLLFKAQQLTDLEQKLAVAKNEL. 2 disordered regions span residues 221–240 and 248–346; these read QPPP…LLPP and PDAA…EKIL. Residues 250 to 261 are compositionally biased toward low complexity; sequence AAAKSKPQQSAS. Residues 262 to 283 are compositionally biased toward polar residues; the sequence is GNNESSQVESTKEGNPSTTACD. N-linked (GlcNAc...) asparagine glycosylation occurs at asparagine 264. Residues 286-298 are compositionally biased toward basic and acidic residues; that stretch reads DEGRPCSMKHKES. Asparagine 302 carries an N-linked (GlcNAc...) asparagine glycan.

The protein resides in the secreted. The sequence is that of Leucine zipper protein 2 (LUZP2) from Homo sapiens (Human).